Here is a 1140-residue protein sequence, read N- to C-terminus: Rho GTPase-activating protein gacF (1140 aa).

Disordered stretches follow at residues 1–145 (MKTH…KPSR), 189–236 (ESDI…IEPI), 455–504 (INNN…STSF), 520–644 (EVQQ…GLES), 661–700 (ESSKLPKKSSLNRQMTIVNSNNIGNGDEKNSDCTTSDEDE), 720–759 (ETNDDNNNNDQINNSNSSNNIPKTTITTTTNNTTTTNNIS), 773–927 (AKVT…STLS), and 952–1095 (TSSP…NHTN). Composition is skewed to low complexity over residues 10-26 (LGGLFSHSSSSPNLKSF) and 35-71 (QQQQQQQHNNNNNNNNNHQRQPSTTSTSSYIDSASSS). Positions 28–55 (TEEVIHEQQQQQQQHNNNNNNNNNHQRQ) form a coiled coil. The segment covering 72–82 (IEETSGYLSKT) has biased composition (polar residues). Low complexity-rich tracts occupy residues 83–136 (SSSS…TSSP) and 193–222 (DNGSSGGTTSSTGNIISHSKSPSSSSSSSS). Positions 234–409 (EPISQSTEDY…RLIENYHSIF (176 aa)) constitute a Rho-GAP domain. 2 stretches are compositionally biased toward low complexity: residues 456-475 (NNNSNSSNNNNSSSSSSPYK) and 482-493 (PKSSPKLNNRNS). A compositionally biased stretch (polar residues) spans 494–504 (ISPKLSSSTSF). A coiled-coil region spans residues 517–548 (ISDEVQQEQQNQQQQQDEQQDEQQDEQQDEQQ). Residues 520–533 (EVQQEQQNQQQQQD) show a composition bias toward low complexity. The span at 534–549 (EQQDEQQDEQQDEQQD) shows a compositional bias: acidic residues. Over residues 550–566 (EQNSNSTSINTSSSSIT) the composition is skewed to low complexity. Polar residues predominate over residues 572–596 (STVQYLNRINTCRRPSSWTNNNRIK). Residues 597 to 606 (QQQHHHHHHQ) show a composition bias toward basic residues. Positions 607–631 (QQQQHQQHQQQQSSSSESNSSLTSS) are enriched in low complexity. Polar residues-rich tracts occupy residues 632 to 641 (PQKRLNSVNG) and 672 to 684 (NRQMTIVNSNNIG). Over residues 724–759 (DNNNNDQINNSNSSNNIPKTTITTTTNNTTTTNNIS) the composition is skewed to low complexity. Residues 773–796 (AKVTPTPTPAPMQTSSFLSTKQTN) show a composition bias toward polar residues. Over residues 797 to 822 (SPSSSSSPSSTVSSTSSSPSSSLSSS) the composition is skewed to low complexity. A compositionally biased stretch (polar residues) spans 823-854 (IDNKTMSNVNYNRFQPANRTVSSPNVRNFSVP). 3 stretches are compositionally biased toward low complexity: residues 891–914 (KPKNTTSSLSSSSSNISKSTNSTP), 952–1058 (TSSP…TSST), and 1065–1079 (HSNSLSQTPSSSSSS).

The protein resides in the cytoplasm. Functionally, rho GTPase-activating protein involved in the signal transduction pathway. This Dictyostelium discoideum (Social amoeba) protein is Rho GTPase-activating protein gacF (gacF).